A 583-amino-acid polypeptide reads, in one-letter code: Exonuclease 3'-5' domain-containing protein 2 (583 aa).

The Mitochondrial intermembrane portion of the chain corresponds to 1-11 (MTRESAVATKR). The helical transmembrane segment at 12–29 (NWAILAAGVGLVYVLVRH) threads the bilayer. The Cytoplasmic portion of the chain corresponds to 30-583 (RHRLLCPLRR…AGLDAKIKET (554 aa)). Positions 62 to 228 (TTQWVLNELK…AIYQKLCRDL (167 aa)) constitute a 3'-5' exonuclease domain. Residues D83, E85, and D213 each contribute to the a divalent metal cation site. Over residues 266–281 (GSGVTRSKGSTQSKSN) the composition is skewed to polar residues. A disordered region spans residues 266 to 286 (GSGVTRSKGSTQSKSNKWVPK).

Belongs to the EXD2 family. In terms of assembly, homodimer. Requires Mg(2+) as cofactor. The cofactor is Mn(2+).

It localises to the mitochondrion membrane. Functionally, 3'-5' exoribonuclease required for mitochondrial metabolism. This is Exonuclease 3'-5' domain-containing protein 2 from Drosophila melanogaster (Fruit fly).